Here is a 405-residue protein sequence, read N- to C-terminus: L-carnitine CoA-transferase (405 aa).

Residues K97 and R104 each contribute to the CoA site. The Nucleophile role is filled by D169.

It belongs to the CoA-transferase III family. CaiB subfamily. As to quaternary structure, homodimer.

The protein resides in the cytoplasm. It carries out the reaction crotonobetainyl-CoA + (R)-carnitine = crotonobetaine + (R)-carnitinyl-CoA. It catalyses the reaction 4-(trimethylamino)butanoyl-CoA + (R)-carnitine = (R)-carnitinyl-CoA + 4-(trimethylamino)butanoate. It functions in the pathway amine and polyamine metabolism; carnitine metabolism. Functionally, catalyzes the reversible transfer of the CoA moiety from gamma-butyrobetainyl-CoA to L-carnitine to generate L-carnitinyl-CoA and gamma-butyrobetaine. Is also able to catalyze the reversible transfer of the CoA moiety from gamma-butyrobetainyl-CoA or L-carnitinyl-CoA to crotonobetaine to generate crotonobetainyl-CoA. The protein is L-carnitine CoA-transferase of Escherichia coli (strain K12 / MC4100 / BW2952).